The sequence spans 370 residues: Histidinol-phosphate aminotransferase 1 (370 aa).

An N6-(pyridoxal phosphate)lysine modification is found at K222.

The protein belongs to the class-II pyridoxal-phosphate-dependent aminotransferase family. Histidinol-phosphate aminotransferase subfamily. In terms of assembly, homodimer. Requires pyridoxal 5'-phosphate as cofactor.

The catalysed reaction is L-histidinol phosphate + 2-oxoglutarate = 3-(imidazol-4-yl)-2-oxopropyl phosphate + L-glutamate. It functions in the pathway amino-acid biosynthesis; L-histidine biosynthesis; L-histidine from 5-phospho-alpha-D-ribose 1-diphosphate: step 7/9. The chain is Histidinol-phosphate aminotransferase 1 from Bacillus thuringiensis subsp. konkukian (strain 97-27).